Consider the following 125-residue polypeptide: Major intrinsically disordered NOTCH2-binding receptor 1-like (125 aa).

A glycan (N-linked (GlcNAc...) asparagine) is linked at N37. The helical transmembrane segment at 100-120 threads the bilayer; it reads FAFITLFVCAVVIIITVPIVV.

It belongs to the MINAR family. In terms of assembly, interacts with NOTCH2. As to expression, highly expressed in the auditory hair cells.

The protein resides in the lysosome membrane. The protein localises to the endoplasmic reticulum membrane. Its function is as follows. Binds cholesterol and may regulate the distribution and homeostasis of cholesterol in hair cells. May play a role in angiogenesis. This is Major intrinsically disordered NOTCH2-binding receptor 1-like from Danio rerio (Zebrafish).